A 302-amino-acid polypeptide reads, in one-letter code: Bifunctional protein FolD (302 aa).

NADP(+) contacts are provided by residues 165 to 167, S190, and I231; that span reads GRS.

The protein belongs to the tetrahydrofolate dehydrogenase/cyclohydrolase family. Homodimer.

The enzyme catalyses (6R)-5,10-methylene-5,6,7,8-tetrahydrofolate + NADP(+) = (6R)-5,10-methenyltetrahydrofolate + NADPH. It catalyses the reaction (6R)-5,10-methenyltetrahydrofolate + H2O = (6R)-10-formyltetrahydrofolate + H(+). It functions in the pathway one-carbon metabolism; tetrahydrofolate interconversion. Functionally, catalyzes the oxidation of 5,10-methylenetetrahydrofolate to 5,10-methenyltetrahydrofolate and then the hydrolysis of 5,10-methenyltetrahydrofolate to 10-formyltetrahydrofolate. This chain is Bifunctional protein FolD, found in Prochlorococcus marinus (strain MIT 9313).